Reading from the N-terminus, the 173-residue chain is Peptide methionine sulfoxide reductase MsrA (173 aa).

Cys-10 is an active-site residue.

This sequence belongs to the MsrA Met sulfoxide reductase family.

The enzyme catalyses L-methionyl-[protein] + [thioredoxin]-disulfide + H2O = L-methionyl-(S)-S-oxide-[protein] + [thioredoxin]-dithiol. It carries out the reaction [thioredoxin]-disulfide + L-methionine + H2O = L-methionine (S)-S-oxide + [thioredoxin]-dithiol. Has an important function as a repair enzyme for proteins that have been inactivated by oxidation. Catalyzes the reversible oxidation-reduction of methionine sulfoxide in proteins to methionine. This is Peptide methionine sulfoxide reductase MsrA from Psychrobacter cryohalolentis (strain ATCC BAA-1226 / DSM 17306 / VKM B-2378 / K5).